A 598-amino-acid polypeptide reads, in one-letter code: UvrABC system protein C (598 aa).

One can recognise a GIY-YIG domain in the interval 11–91; that stretch reads QKPGVYIMHN…IKKYRPHYNI (81 aa). In terms of domain architecture, UVR spans 195 to 230; that stretch reads KTTIKKLKKDMNRYAKNMEFEKAAMLRDQIDTIKIT.

The protein belongs to the UvrC family. As to quaternary structure, interacts with UvrB in an incision complex.

The protein resides in the cytoplasm. Its function is as follows. The UvrABC repair system catalyzes the recognition and processing of DNA lesions. UvrC both incises the 5' and 3' sides of the lesion. The N-terminal half is responsible for the 3' incision and the C-terminal half is responsible for the 5' incision. The polypeptide is UvrABC system protein C (Methanosphaera stadtmanae (strain ATCC 43021 / DSM 3091 / JCM 11832 / MCB-3)).